An 83-amino-acid chain; its full sequence is MQNDAGEFVDLYVPRKCSASNRIIGAKDHASIQMNVAEVDKVTGRFNGQFKTYAICGAIRRMGESDDSILRLAKSDGIVSQNF.

The residue at position 1 (Met1) is an N-acetylmethionine. Lys41 participates in a covalent cross-link: Glycyl lysine isopeptide (Lys-Gly) (interchain with G-Cter in SUMO2).

It belongs to the eukaryotic ribosomal protein eS21 family. In terms of assembly, component of the 40S small ribosomal subunit.

It is found in the cytoplasm. Its subcellular location is the cytosol. The protein resides in the rough endoplasmic reticulum. Its function is as follows. Component of the small ribosomal subunit. The ribosome is a large ribonucleoprotein complex responsible for the synthesis of proteins in the cell. The chain is Small ribosomal subunit protein eS21 (RPS21) from Oryctolagus cuniculus (Rabbit).